A 196-amino-acid polypeptide reads, in one-letter code: Dephospho-CoA kinase (196 aa).

One can recognise a DPCK domain in the interval 3–196 (RIGLTGNIGC…KVYEELTRDP (194 aa)). An ATP-binding site is contributed by 11–16 (GCGKST).

The protein belongs to the CoaE family.

The protein localises to the cytoplasm. It catalyses the reaction 3'-dephospho-CoA + ATP = ADP + CoA + H(+). The protein operates within cofactor biosynthesis; coenzyme A biosynthesis; CoA from (R)-pantothenate: step 5/5. Its function is as follows. Catalyzes the phosphorylation of the 3'-hydroxyl group of dephosphocoenzyme A to form coenzyme A. This Aquifex aeolicus (strain VF5) protein is Dephospho-CoA kinase.